The chain runs to 231 residues: Aquaporin Z (231 aa).

Transmembrane regions (helical) follow at residues 9–29 and 34–54; these read CFGTFWLVFGGCGSAVLAAGF and IGFAGVALAFGLTVLTMAFAV. Positions 63-65 match the NPA 1 motif; that stretch reads NPA. 3 consecutive transmembrane segments (helical) span residues 82–102, 129–149, and 156–176; these read VGYVIAQVVGGIVAAALLYLI, YSMLSALVVELVLSAGFLLVI, and FAPAGFAPIAIGLALTLIHLI. The NPA 2 motif lies at 186-188; it reads NPA. Residues 202–222 form a helical membrane-spanning segment; that stretch reads LEQLWFFWVVPIVGGIIGGLI.

This sequence belongs to the MIP/aquaporin (TC 1.A.8) family. In terms of assembly, homotetramer.

The protein resides in the cell inner membrane. It catalyses the reaction H2O(in) = H2O(out). Its function is as follows. Channel that permits osmotically driven movement of water in both directions. It is involved in the osmoregulation and in the maintenance of cell turgor during volume expansion in rapidly growing cells. It mediates rapid entry or exit of water in response to abrupt changes in osmolarity. The polypeptide is Aquaporin Z (Escherichia coli O6:H1 (strain CFT073 / ATCC 700928 / UPEC)).